We begin with the raw amino-acid sequence, 181 residues long: Probable nicotinate-nucleotide adenylyltransferase (181 aa).

It belongs to the NadD family.

The enzyme catalyses nicotinate beta-D-ribonucleotide + ATP + H(+) = deamido-NAD(+) + diphosphate. It functions in the pathway cofactor biosynthesis; NAD(+) biosynthesis; deamido-NAD(+) from nicotinate D-ribonucleotide: step 1/1. Its function is as follows. Catalyzes the reversible adenylation of nicotinate mononucleotide (NaMN) to nicotinic acid adenine dinucleotide (NaAD). This chain is Probable nicotinate-nucleotide adenylyltransferase, found in Campylobacter jejuni subsp. jejuni serotype O:6 (strain 81116 / NCTC 11828).